We begin with the raw amino-acid sequence, 514 residues long: Sugar transport protein 10 (514 aa).

Topologically, residues 1–18 are cytoplasmic; the sequence is MAGGAFVSEGGGGGRSYE. Transmembrane regions (helical) follow at residues 19–39, 86–106, 113–133, 135–155, 170–190, 204–224, 285–305, 320–340, 350–370, and 389–409; these read GGVT…GLLF, LFTS…SVIT, VSMF…AFAV, VSML…ANQS, GALN…ANLI, VSLG…FILP, LIFC…VIMF, AALM…FVSI, LLFL…GSFI, and WILA…GPLG. An intrachain disulfide couples Cys-77 to Cys-449. Gln-177 contributes to the beta-D-glucose binding site. Beta-D-glucose contacts are provided by Gln-295, Gln-296, Asn-301, and Asn-332. Trp-410 is a beta-D-glucose binding site. The next 2 helical transmembrane spans lie at 428–448 and 453–473; these read INVS…LTML and FGLF…IYFL. Topologically, residues 474 to 514 are cytoplasmic; that stretch reads LPETKGVPIEEMGRVWKQHWFWKKYIPEDAIIGGHDDNNTN.

Belongs to the major facilitator superfamily. Sugar transporter (TC 2.A.1.1) family. In terms of tissue distribution, expressed in primordia of lateral roots, pollinated stigmata, and pollen tubes.

The protein localises to the membrane. The catalysed reaction is D-glucose(out) + H(+)(out) = D-glucose(in) + H(+)(in). The enzyme catalyses D-mannose(out) + H(+)(out) = D-mannose(in) + H(+)(in). It catalyses the reaction D-galactose(in) + H(+)(in) = D-galactose(out) + H(+)(out). Hexose-H(+) symporter that catalyzes the high-affinity uptake of glucose, galactose and mannose. Proton-coupled symporter responsible for the uptake of glucose from the apoplast into the cells. In Arabidopsis thaliana (Mouse-ear cress), this protein is Sugar transport protein 10.